Reading from the N-terminus, the 498-residue chain is Tryptophan decarboxylase TDC2 (498 aa).

Lys-316 bears the N6-(pyridoxal phosphate)lysine mark.

The protein belongs to the group II decarboxylase family. It depends on pyridoxal 5'-phosphate as a cofactor.

The catalysed reaction is L-tryptophan + H(+) = tryptamine + CO2. Functionally, involved in the biosynthesis of tryptamine. Supplies tryptamine for the indole moiety of camptothecin (CPT), an anti-cancer monoterpene alkaloid. Represents a key step in monoterpene indole alkaloid biosynthesis. Is specific for tryptophan, and inactive against tyrosine, phenylalanine and 3,4-dihydroxyphenylalanine (dopa). This Camptotheca acuminata (Happy tree) protein is Tryptophan decarboxylase TDC2.